Consider the following 405-residue polypeptide: Octaketide synthase 3 (405 aa).

Polar residues predominate over residues 1–10 (MGSIAESSPL). Positions 1 to 22 (MGSIAESSPLMSRENVEGIRKA) are disordered. Cys176 is an active-site residue. CoA-binding positions include Ser283 and 320-323 (GGRA).

Belongs to the thiolase-like superfamily. Chalcone/stilbene synthases family. As to quaternary structure, homodimer.

The protein operates within secondary metabolite biosynthesis; flavonoid biosynthesis. Catalyzes the iterative condensations of 8 molecules of malonyl-CoA to produce aromatic octaketides, SEK4 and SEK4b, the products of the minimal polyketide synthase for the benzoisochromanequinone actinorhodin. May be involved in the biosynthesis of the octaketide barbaloin. In Aloe arborescens (Kidachi aloe), this protein is Octaketide synthase 3 (PKS5).